The chain runs to 265 residues: 4-hydroxy-tetrahydrodipicolinate reductase (265 aa).

9-14 (GPRGRM) lines the NAD(+) pocket. Arg-37 serves as a coordination point for NADP(+). Residues 98–100 (GTT) and 124–127 (APNF) each bind NAD(+). The active-site Proton donor/acceptor is His-154. (S)-2,3,4,5-tetrahydrodipicolinate is bound at residue His-155. Residue Lys-158 is the Proton donor of the active site. 164-165 (GT) contacts (S)-2,3,4,5-tetrahydrodipicolinate.

Belongs to the DapB family.

The protein localises to the cytoplasm. It carries out the reaction (S)-2,3,4,5-tetrahydrodipicolinate + NAD(+) + H2O = (2S,4S)-4-hydroxy-2,3,4,5-tetrahydrodipicolinate + NADH + H(+). The enzyme catalyses (S)-2,3,4,5-tetrahydrodipicolinate + NADP(+) + H2O = (2S,4S)-4-hydroxy-2,3,4,5-tetrahydrodipicolinate + NADPH + H(+). The protein operates within amino-acid biosynthesis; L-lysine biosynthesis via DAP pathway; (S)-tetrahydrodipicolinate from L-aspartate: step 4/4. In terms of biological role, catalyzes the conversion of 4-hydroxy-tetrahydrodipicolinate (HTPA) to tetrahydrodipicolinate. In Geobacillus kaustophilus (strain HTA426), this protein is 4-hydroxy-tetrahydrodipicolinate reductase.